We begin with the raw amino-acid sequence, 132 residues long: Monothiol glutaredoxin-S9 (132 aa).

Residues 16–38 (ASRPATAAAAPPPPPPRGEEEEV) are disordered. Residues 35–131 (EEEVRRAVAE…PILKEAGALW (97 aa)) form the Glutaredoxin domain. C55 serves as a coordination point for [2Fe-2S] cluster. The Responsive for interaction with TGA factors motif lies at 129–132 (ALWL).

It belongs to the glutaredoxin family. CC-type subfamily.

It localises to the cytoplasm. It is found in the nucleus. In terms of biological role, may only reduce GSH-thiol disulfides, but not protein disulfides. In Oryza sativa subsp. japonica (Rice), this protein is Monothiol glutaredoxin-S9 (GRXS9).